We begin with the raw amino-acid sequence, 265 residues long: Polyphosphate glucokinase (265 aa).

The span at 1-18 (MTSTGPETSETPGATTQR) shows a compositional bias: polar residues. The segment at 1–22 (MTSTGPETSETPGATTQRHGFG) is disordered. An ATP-binding site is contributed by 24-29 (DVGGSG).

It belongs to the ROK (NagC/XylR) family. Homodimer.

It carries out the reaction [phosphate](n) + D-glucose = [phosphate](n-1) + D-glucose 6-phosphate + H(+). The catalysed reaction is D-glucose + ATP = D-glucose 6-phosphate + ADP + H(+). Catalyzes the phosphorylation of glucose using polyphosphate or ATP as the phosphoryl donor. Polyphosphate, rather than ATP, seems to be the major phosphate donor for the enzyme in M.tuberculosis. The sequence is that of Polyphosphate glucokinase (ppgK) from Mycobacterium tuberculosis (strain CDC 1551 / Oshkosh).